Consider the following 382-residue polypeptide: MQDAAPRLTFTLRDEERLMMKIGVFVPIGNNGWLISTHAPQYMPTFELNKAIVQKAEHYHFDFALSMIKLRGFGGKTEFWDHNLESFTLMAGLAAVTSRIQIYATAATLTLPPAIVARMAATIDSISGGRFGVNLVTGWQKPEYEQMGIWPGDDYFSRRYDYLTEYVQVLRDLWGTGKSDFKGDFFTMNDCRVSPQPSVPMKVICAGQSDAGMAFSARYADFNFCFGKGVNTPTAFAPTAARMKQAAEQTGRDVGSYVLFMVIADETDDAARAKWEHYKAGADEEALSWLTEQSQKDTRSGTDTNVRQMADPTSAVNINMGTLVGSYASVARMLDEVASVPGAEGVLLTFDDFLSGIETFGERIQPLMQCRAHLPALTQEVA.

Residues 68-69 (IK), Asn-134, Glu-143, 159-160 (RY), and Ser-209 each bind FMN.

The protein belongs to the NtaA/SnaA/DszA monooxygenase family. RutA subfamily.

It carries out the reaction uracil + FMNH2 + NADH + O2 = (Z)-3-ureidoacrylate + FMN + NAD(+) + H2O + H(+). The catalysed reaction is thymine + FMNH2 + NADH + O2 = (Z)-2-methylureidoacrylate + FMN + NAD(+) + H2O + H(+). Its function is as follows. Catalyzes the pyrimidine ring opening between N-3 and C-4 by an unusual flavin hydroperoxide-catalyzed mechanism, adding oxygen atoms in the process to yield ureidoacrylate peracid, that immediately reacts with FMN forming ureidoacrylate and FMN-N(5)-oxide. The FMN-N(5)-oxide reacts spontaneously with NADH to produce FMN. Requires the flavin reductase RutF to regenerate FMN in vivo. The chain is Pyrimidine monooxygenase RutA from Escherichia coli (strain K12 / MC4100 / BW2952).